The sequence spans 449 residues: Gamma conglutin 1 (449 aa).

An N-terminal signal peptide occupies residues M1–L33. The Peptidase A1 domain occupies H60–N429. Disulfide bonds link C88–C178, C102–C115, C107–C133, C118–C128, and C350–C391. A glycan (N-linked (GlcNAc...) asparagine) is linked at N130.

Belongs to the peptidase A1 family. Two-subunit monomeric unit made of alpha and beta subunits coupled by disulfide bonds (at pH 4.5 and under non-reducing conditions). Can also form oligomers including dimer, tetramer and cyclic hexamer (trimer of dimers) (at pH &gt; 5.5). Component of globulins complexes which accumulate in seeds. Interacts with flavonoids (e.g. apigenin glucosides) present in globulins complexes. Forms a static complex with vitexin. Post-translationally, undergoes very complex post-translational maturation; the proteolytic processing leading to the formation of two alpha and beta subunits is incomplete, leaving a certain amount of the protein in an uncut form. In terms of processing, glycosylated on alpha chain. Expressed in developing cotyledons and in the embryonic axis of germinating seeds. Accumulates in seeds, especially in the protein bodies of developing cotyledonary cells (at protein level). Also detected, at low levels, in plumules and radicles.

It is found in the secreted. Its subcellular location is the extracellular space. In terms of biological role, sulfur-rich seed storage protein that remains undegraded at germination. This Lupinus angustifolius (Narrow-leaved blue lupine) protein is Gamma conglutin 1.